A 112-amino-acid polypeptide reads, in one-letter code: Putative pterin-4-alpha-carbinolamine dehydratase (112 aa).

Belongs to the pterin-4-alpha-carbinolamine dehydratase family.

It carries out the reaction (4aS,6R)-4a-hydroxy-L-erythro-5,6,7,8-tetrahydrobiopterin = (6R)-L-erythro-6,7-dihydrobiopterin + H2O. The protein is Putative pterin-4-alpha-carbinolamine dehydratase of Syntrophotalea carbinolica (strain DSM 2380 / NBRC 103641 / GraBd1) (Pelobacter carbinolicus).